Reading from the N-terminus, the 141-residue chain is Flagellar assembly factor FliW (141 aa).

It belongs to the FliW family. Interacts with translational regulator CsrA and flagellin(s).

It localises to the cytoplasm. Acts as an anti-CsrA protein, binds CsrA and prevents it from repressing translation of its target genes, one of which is flagellin. Binds to flagellin and participates in the assembly of the flagellum. In Clostridium beijerinckii (strain ATCC 51743 / NCIMB 8052) (Clostridium acetobutylicum), this protein is Flagellar assembly factor FliW.